Here is a 107-residue protein sequence, read N- to C-terminus: Rhodocoxin (107 aa).

The 2Fe-2S ferredoxin-type domain maps to 2 to 106 (PTVTYVHPDG…GLIVRLPEEQ (105 aa)). The [2Fe-2S] cluster site is built by Cys40, Cys46, Cys49, and Cys87.

It belongs to the adrenodoxin/putidaredoxin family. [2Fe-2S] cluster is required as a cofactor.

Functionally, ferredoxin-type protein which transfers electrons from rhodocoxin reductase to cytochrome CYP116 (ThcB), which is involved in the degradation of thiocarbamate herbicides. The polypeptide is Rhodocoxin (thcC) (Rhodococcus erythropolis (Arthrobacter picolinophilus)).